The following is a 252-amino-acid chain: Transmembrane ascorbate-dependent reductase CYB561 (252 aa).

Met1 bears the N-acetylmethionine mark. Over 1 to 17 the chain is Cytoplasmic; sequence MEGPASPARAPGALPYY. A helical membrane pass occupies residues 18–38; it reads VAFSQLLGLIVVAMTGAWLGM. One can recognise a Cytochrome b561 domain in the interval 20-221; it reads FSQLLGLIVV…FATVILYILT (202 aa). Residues 39 to 52 lie on the Vesicular side of the membrane; it reads YRGGIAWESALQFN. A helical membrane pass occupies residues 53-73; it reads VHPLCMIIGLVFLQGDALLVY. 3 residues coordinate heme b: His54, Arg74, and Lys81. Residues 74 to 86 lie on the Cytoplasmic side of the membrane; it reads RVFRNEAKRTTKV. Residues Lys81 and Lys85 each contribute to the L-ascorbate site. A helical membrane pass occupies residues 87–107; it reads LHGLLHVFAFVIALVGLVAVF. Residues His88, 117–120, and His122 each bind heme b; that span reads DLYS. Residues 108–125 are Vesicular-facing; that stretch reads EHHRKKGYADLYSLHSWC. Residues 126–146 form a helical membrane-spanning segment; that stretch reads GILVFALFFAQWLVGFSFFLF. The Cytoplasmic portion of the chain corresponds to 147-159; it reads PGASFSLRSRYRP. Arg154 is an L-ascorbate binding site. The chain crosses the membrane as a helical span at residues 160–180; the sequence is QHVFFGAAIFLLSVATALLGL. His161 and Glu182 together coordinate heme b. Residues 181–199 are Vesicular-facing; sequence KEALLFELGTKYSMFEPEG. A helical membrane pass occupies residues 200–220; the sequence is VLANVLGLLLATFATVILYIL. Topologically, residues 221-252 are cytoplasmic; that stretch reads TRADWKRPLQAEEQALSMDFKTLTEGDSPSSQ. Lys226 is a binding site for heme b. Ser248 and Ser250 each carry phosphoserine.

It depends on heme b as a cofactor. In terms of tissue distribution, expressed in the adrenal medulla and all brain regions, but not in visceral organs.

The protein resides in the cytoplasmic vesicle. It localises to the secretory vesicle. It is found in the chromaffin granule membrane. It carries out the reaction monodehydro-L-ascorbate radical(out) + L-ascorbate(in) = monodehydro-L-ascorbate radical(in) + L-ascorbate(out). Transmembrane reductase that uses ascorbate as an electron donor in the cytoplasm and transfers electrons across membranes to reduce monodehydro-L-ascorbate radical in the lumen of secretory vesicles. It is therefore involved the regeneration and homeostasis within secretory vesicles of ascorbate which in turn provides reducing equivalents needed to support the activity of intravesicular enzymes. The protein is Transmembrane ascorbate-dependent reductase CYB561 (CYB561) of Bos taurus (Bovine).